Reading from the N-terminus, the 763-residue chain is Protein translocase subunit SecA 2 (763 aa).

Residues Gln-83, 101–105 (GEGKT), and Asp-490 each bind ATP.

It belongs to the SecA family. As to quaternary structure, monomer and homodimer. Part of the essential Sec protein translocation apparatus which comprises SecA, SecYEG and auxiliary proteins SecDF. Other proteins may also be involved.

It is found in the cell membrane. The protein localises to the cytoplasm. It catalyses the reaction ATP + H2O + cellular proteinSide 1 = ADP + phosphate + cellular proteinSide 2.. In terms of biological role, part of the Sec protein translocase complex. Interacts with the SecYEG preprotein conducting channel. Has a central role in coupling the hydrolysis of ATP to the transfer of proteins into and across the cell membrane, serving as an ATP-driven molecular motor driving the stepwise translocation of polypeptide chains across the membrane. The polypeptide is Protein translocase subunit SecA 2 (Corynebacterium efficiens (strain DSM 44549 / YS-314 / AJ 12310 / JCM 11189 / NBRC 100395)).